A 113-amino-acid polypeptide reads, in one-letter code: UPF0122 protein M6_Spy0905 (113 aa).

Belongs to the UPF0122 family.

Functionally, might take part in the signal recognition particle (SRP) pathway. This is inferred from the conservation of its genetic proximity to ftsY/ffh. May be a regulatory protein. This Streptococcus pyogenes serotype M6 (strain ATCC BAA-946 / MGAS10394) protein is UPF0122 protein M6_Spy0905.